Consider the following 83-residue polypeptide: Small ribosomal subunit protein bS16 (83 aa).

The protein belongs to the bacterial ribosomal protein bS16 family.

In Polaromonas sp. (strain JS666 / ATCC BAA-500), this protein is Small ribosomal subunit protein bS16.